The chain runs to 200 residues: H-2 class I histocompatibility antigen, Q9 alpha chain (200 aa).

The first 21 residues, 1-21 (MALTMLLLLVAAALTLIETRA), serve as a signal peptide directing secretion. An alpha-1 region spans residues 22–111 (GQHSLQYFHT…AQSYYNQSKG (90 aa)). The Extracellular portion of the chain corresponds to 22-200 (GQHSLQYFHT…RYLELGKETL (179 aa)). An N-linked (GlcNAc...) asparagine glycan is attached at asparagine 107. Residues 112-200 (GSHTLQWMYG…RYLELGKETL (89 aa)) form an alpha-2 region. An intrachain disulfide couples cysteine 122 to cysteine 185.

This sequence belongs to the MHC class I family. In terms of assembly, heterodimer of an alpha chain and a beta chain (beta-2-microglobulin).

It localises to the membrane. In terms of biological role, involved in the presentation of foreign antigens to the immune system. The protein is H-2 class I histocompatibility antigen, Q9 alpha chain (H2-Q9) of Mus musculus (Mouse).